Here is a 592-residue protein sequence, read N- to C-terminus: Bifunctional purine biosynthesis protein ATIC (592 aa).

Methionine 1 is subject to N-acetylmethionine. An MGS-like domain is found at 1–146 (MAPGHLALFS…KNHARVTVVC (146 aa)). Residues 1–198 (MAPGHLALFS…ISDYFRKQYS (198 aa)) are IMP cyclohydrolase. IMP is bound by residues 12 to 14 (SDK), 34 to 37 (SGGT), 64 to 67 (RVKT), 101 to 102 (CN), and 125 to 126 (DI). The active-site Proton donor/acceptor; for FAICAR cyclization activity is lysine 137. Lysine 199 carries the N6-acetyllysine modification. The interval 199-592 (KGISQMPLRY…AHTNLRLFHH (394 aa)) is AICAR formyltransferase. Residues 207–208 (RY), histidine 267, glycine 316, aspartate 339, asparagine 431, and arginine 451 each bind 5-amino-1-(5-phospho-beta-D-ribosyl)imidazole-4-carboxamide. Residue histidine 267 is the Proton acceptor; for AICAR formyltransferase activity of the active site. A (6R)-10-formyltetrahydrofolate-binding site is contributed by isoleucine 452. Phenylalanine 541 is a 5-amino-1-(5-phospho-beta-D-ribosyl)imidazole-4-carboxamide binding site. (6R)-10-formyltetrahydrofolate contacts are provided by residues aspartate 546 and 565-566 (SA). Arginine 588 contributes to the 5-amino-1-(5-phospho-beta-D-ribosyl)imidazole-4-carboxamide binding site.

The protein belongs to the PurH family. In terms of assembly, homodimer. Associates with internalized INSR complexes on Golgi/endosomal membranes. Interacts with INSR; ATIC together with PRKAA2/AMPK2 and HACD3/PTPLAD1 is proposed to be part of a signaling network regulating INSR autophosphorylation and endocytosis.

It is found in the cytoplasm. Its subcellular location is the cytosol. It catalyses the reaction (6R)-10-formyltetrahydrofolate + 5-amino-1-(5-phospho-beta-D-ribosyl)imidazole-4-carboxamide = 5-formamido-1-(5-phospho-D-ribosyl)imidazole-4-carboxamide + (6S)-5,6,7,8-tetrahydrofolate. The catalysed reaction is 10-formyldihydrofolate + 5-amino-1-(5-phospho-beta-D-ribosyl)imidazole-4-carboxamide = 5-formamido-1-(5-phospho-D-ribosyl)imidazole-4-carboxamide + 7,8-dihydrofolate. It carries out the reaction IMP + H2O = 5-formamido-1-(5-phospho-D-ribosyl)imidazole-4-carboxamide. It functions in the pathway purine metabolism; IMP biosynthesis via de novo pathway; 5-formamido-1-(5-phospho-D-ribosyl)imidazole-4-carboxamide from 5-amino-1-(5-phospho-D-ribosyl)imidazole-4-carboxamide (10-formyl THF route): step 1/1. It participates in purine metabolism; IMP biosynthesis via de novo pathway; IMP from 5-formamido-1-(5-phospho-D-ribosyl)imidazole-4-carboxamide: step 1/1. Its activity is regulated as follows. AMP and XMP inhibit AICAR formyltransferase activity. Functionally, bifunctional enzyme that catalyzes the last two steps of purine biosynthesis. Acts as a transformylase that incorporates a formyl group to the AMP analog AICAR (5-amino-1-(5-phospho-beta-D-ribosyl)imidazole-4-carboxamide) to produce the intermediate formyl-AICAR (FAICAR). Can use both 10-formyldihydrofolate and 10-formyltetrahydrofolate as the formyl donor in this reaction. Also catalyzes the cyclization of FAICAR to inosine monophosphate (IMP). Promotes insulin receptor/INSR autophosphorylation and is involved in INSR internalization. The protein is Bifunctional purine biosynthesis protein ATIC (ATIC) of Pongo abelii (Sumatran orangutan).